A 348-amino-acid chain; its full sequence is 3-isopropylmalate dehydrogenase (348 aa).

Residue 76 to 87 (GPKWTDPNNRPE) coordinates NAD(+). 4 residues coordinate substrate: Arg94, Arg104, Arg132, and Asp217. Mg(2+)-binding residues include Asp217, Asp241, and Asp245. 275 to 287 (GSAPDIAGKNVAN) provides a ligand contact to NAD(+).

The protein belongs to the isocitrate and isopropylmalate dehydrogenases family. LeuB type 1 subfamily. In terms of assembly, homodimer. Requires Mg(2+) as cofactor. It depends on Mn(2+) as a cofactor.

Its subcellular location is the cytoplasm. The catalysed reaction is (2R,3S)-3-isopropylmalate + NAD(+) = 4-methyl-2-oxopentanoate + CO2 + NADH. Its pathway is amino-acid biosynthesis; L-leucine biosynthesis; L-leucine from 3-methyl-2-oxobutanoate: step 3/4. Catalyzes the oxidation of 3-carboxy-2-hydroxy-4-methylpentanoate (3-isopropylmalate) to 3-carboxy-4-methyl-2-oxopentanoate. The product decarboxylates to 4-methyl-2 oxopentanoate. The chain is 3-isopropylmalate dehydrogenase from Staphylococcus aureus (strain MW2).